The chain runs to 268 residues: Ribosomal RNA small subunit methyltransferase A (268 aa).

The S-adenosyl-L-methionine site is built by Asn-23, Leu-25, Gly-50, Glu-72, Asp-94, and Asn-116.

Belongs to the class I-like SAM-binding methyltransferase superfamily. rRNA adenine N(6)-methyltransferase family. RsmA subfamily.

The protein localises to the cytoplasm. The enzyme catalyses adenosine(1518)/adenosine(1519) in 16S rRNA + 4 S-adenosyl-L-methionine = N(6)-dimethyladenosine(1518)/N(6)-dimethyladenosine(1519) in 16S rRNA + 4 S-adenosyl-L-homocysteine + 4 H(+). In terms of biological role, specifically dimethylates two adjacent adenosines (A1518 and A1519) in the loop of a conserved hairpin near the 3'-end of 16S rRNA in the 30S particle. May play a critical role in biogenesis of 30S subunits. The chain is Ribosomal RNA small subunit methyltransferase A from Mycoplasmoides gallisepticum (strain R(low / passage 15 / clone 2)) (Mycoplasma gallisepticum).